Consider the following 222-residue polypeptide: Peptide methionine sulfoxide reductase MsrA (222 aa).

The active site involves cysteine 60.

Belongs to the MsrA Met sulfoxide reductase family.

The enzyme catalyses L-methionyl-[protein] + [thioredoxin]-disulfide + H2O = L-methionyl-(S)-S-oxide-[protein] + [thioredoxin]-dithiol. It carries out the reaction [thioredoxin]-disulfide + L-methionine + H2O = L-methionine (S)-S-oxide + [thioredoxin]-dithiol. Its function is as follows. Has an important function as a repair enzyme for proteins that have been inactivated by oxidation. Catalyzes the reversible oxidation-reduction of methionine sulfoxide in proteins to methionine. The polypeptide is Peptide methionine sulfoxide reductase MsrA (Pseudomonas putida (strain ATCC 47054 / DSM 6125 / CFBP 8728 / NCIMB 11950 / KT2440)).